A 377-amino-acid polypeptide reads, in one-letter code: Nitric oxide reductase FlRd-NAD(+) reductase (377 aa).

Belongs to the FAD-dependent oxidoreductase family. FAD serves as cofactor.

It is found in the cytoplasm. It carries out the reaction 2 reduced [nitric oxide reductase rubredoxin domain] + NAD(+) + H(+) = 2 oxidized [nitric oxide reductase rubredoxin domain] + NADH. The protein operates within nitrogen metabolism; nitric oxide reduction. One of at least two accessory proteins for anaerobic nitric oxide (NO) reductase. Reduces the rubredoxin moiety of NO reductase. In Escherichia coli O7:K1 (strain IAI39 / ExPEC), this protein is Nitric oxide reductase FlRd-NAD(+) reductase.